The primary structure comprises 489 residues: Cobyric acid synthase (489 aa).

Residues 254–442 (ARVIAVPVLP…VHGLFADDRQ (189 aa)) form the GATase cobBQ-type domain. The Nucleophile role is filled by cysteine 336. Residue histidine 434 is part of the active site.

It belongs to the CobB/CobQ family. CobQ subfamily.

Its pathway is cofactor biosynthesis; adenosylcobalamin biosynthesis. Catalyzes amidations at positions B, D, E, and G on adenosylcobyrinic A,C-diamide. NH(2) groups are provided by glutamine, and one molecule of ATP is hydrogenolyzed for each amidation. This is Cobyric acid synthase from Methylobacterium nodulans (strain LMG 21967 / CNCM I-2342 / ORS 2060).